A 496-amino-acid chain; its full sequence is MIDLKQYEFWFLVGSQYLYGLETLKKVEQQASKIVDSLNDDPIFPSKIVLKPVLKSSSEITEIFEKANADPKCAGVIVWMHTFSPSKMWIRGLSINKKPLLHLHTQYNREIPWDTIDMDYMNLNQSAHGDREHGFIHARMRLPRKVVVGHWEEKEVREKIAKWMRVACAIQDGRTGQIVRFGDNMREVASTEGDKVEAQIKLGWSINTWGVGELAERVKAVPDNEVEELLTEYREKYIMPEDEYSLKAIREQAKIEIALREFLKEKNAIAFTTTFEDLHDLPQLPGLAVQRLMEEGYGFGAEGDWKAAGLVRAIKVMGTGLPGGTSFMEDYTYHLTPGNELVLGAHMLEVCPTIAKEKPRIEVHPLSIGGKADPARLVFDGQEGPAVNASIVDMGNRFRLVVNKVLSVPIERKMPKLPTARVLWKPLPDFKRATTAWILAGGSHHTAFSTAIDVEYLIDWAEALEIEYVVIDENLDLEDFKKELRWNELYWGLLKR.

Mn(2+)-binding residues include Glu302, Glu329, His346, and His445.

It belongs to the arabinose isomerase family. It depends on Mn(2+) as a cofactor.

The catalysed reaction is beta-L-arabinopyranose = L-ribulose. It functions in the pathway carbohydrate degradation; L-arabinose degradation via L-ribulose; D-xylulose 5-phosphate from L-arabinose (bacterial route): step 1/3. Its function is as follows. Catalyzes the conversion of L-arabinose to L-ribulose. The chain is L-arabinose isomerase from Thermotoga petrophila (strain ATCC BAA-488 / DSM 13995 / JCM 10881 / RKU-1).